The chain runs to 230 residues: N-(5'-phosphoribosyl)anthranilate isomerase (230 aa).

This sequence belongs to the TrpF family.

The enzyme catalyses N-(5-phospho-beta-D-ribosyl)anthranilate = 1-(2-carboxyphenylamino)-1-deoxy-D-ribulose 5-phosphate. Its pathway is amino-acid biosynthesis; L-tryptophan biosynthesis; L-tryptophan from chorismate: step 3/5. The protein is N-(5'-phosphoribosyl)anthranilate isomerase of Ralstonia nicotianae (strain ATCC BAA-1114 / GMI1000) (Ralstonia solanacearum).